Reading from the N-terminus, the 880-residue chain is Leucine--tRNA ligase (880 aa).

Residues 46 to 56 (PYPSGALHMGH) carry the 'HIGH' region motif. Residues 638–642 (KMSKS) carry the 'KMSKS' region motif. Lys-641 contributes to the ATP binding site.

This sequence belongs to the class-I aminoacyl-tRNA synthetase family.

It localises to the cytoplasm. It catalyses the reaction tRNA(Leu) + L-leucine + ATP = L-leucyl-tRNA(Leu) + AMP + diphosphate. This Xanthomonas oryzae pv. oryzae (strain MAFF 311018) protein is Leucine--tRNA ligase.